The primary structure comprises 123 residues: MARIAGIDLPRDKRIVIGLTYIYGIGNTTAQKVLAEAGVSEDVRVRDLTSDQEDAIRATVDKLNLQLEGDLRRKVSLDIKSLQEIASYRGIRHRKGLPVRGQNTKNNARTRKGPAKAIAGKKK.

A disordered region spans residues 93–123 (HRKGLPVRGQNTKNNARTRKGPAKAIAGKKK). Residues 108–123 (ARTRKGPAKAIAGKKK) show a composition bias toward basic residues.

The protein belongs to the universal ribosomal protein uS13 family. Part of the 30S ribosomal subunit. Forms a loose heterodimer with protein S19. Forms two bridges to the 50S subunit in the 70S ribosome.

In terms of biological role, located at the top of the head of the 30S subunit, it contacts several helices of the 16S rRNA. In the 70S ribosome it contacts the 23S rRNA (bridge B1a) and protein L5 of the 50S subunit (bridge B1b), connecting the 2 subunits; these bridges are implicated in subunit movement. Contacts the tRNAs in the A and P-sites. This Leuconostoc mesenteroides subsp. mesenteroides (strain ATCC 8293 / DSM 20343 / BCRC 11652 / CCM 1803 / JCM 6124 / NCDO 523 / NBRC 100496 / NCIMB 8023 / NCTC 12954 / NRRL B-1118 / 37Y) protein is Small ribosomal subunit protein uS13.